The following is a 373-amino-acid chain: Tryptophan--tRNA ligase (373 aa).

A 'HIGH' region motif is present at residues 79 to 87; that stretch reads PSGKFHFGH. Positions 257–261 match the 'KMSKS' region motif; it reads KMSSS.

It belongs to the class-I aminoacyl-tRNA synthetase family.

It is found in the cytoplasm. The enzyme catalyses tRNA(Trp) + L-tryptophan + ATP = L-tryptophyl-tRNA(Trp) + AMP + diphosphate + H(+). The chain is Tryptophan--tRNA ligase from Hyperthermus butylicus (strain DSM 5456 / JCM 9403 / PLM1-5).